A 204-amino-acid chain; its full sequence is Probable GTP-binding protein EngB (204 aa).

In terms of domain architecture, EngB-type G spans 22–197 (GFPEIAFVGR…LAEFDNVLSI (176 aa)). GTP contacts are provided by residues 30–37 (GRSNVGKS), 57–61 (GKTRQ), 75–78 (DLPG), 144–147 (NKVD), and 176–178 (FSA). Residues serine 37 and threonine 59 each contribute to the Mg(2+) site.

Belongs to the TRAFAC class TrmE-Era-EngA-EngB-Septin-like GTPase superfamily. EngB GTPase family. It depends on Mg(2+) as a cofactor.

Its function is as follows. Necessary for normal cell division and for the maintenance of normal septation. This is Probable GTP-binding protein EngB from Ruminiclostridium cellulolyticum (strain ATCC 35319 / DSM 5812 / JCM 6584 / H10) (Clostridium cellulolyticum).